A 231-amino-acid chain; its full sequence is Translin-associated protein X homolog (231 aa).

Belongs to the translin family.

It localises to the cytoplasm. The protein localises to the nucleus. This Schizosaccharomyces pombe (strain 972 / ATCC 24843) (Fission yeast) protein is Translin-associated protein X homolog.